The following is a 411-amino-acid chain: Phospholipase A1-II 6 (411 aa).

Catalysis depends on Ser-226, which acts as the Acyl-ester intermediate. Catalysis depends on charge relay system residues Ser-226, Asp-296, and His-334.

This sequence belongs to the AB hydrolase superfamily. Lipase family.

It is found in the cytoplasm. Functionally, acylhydrolase that catalyzes the hydrolysis of phospholipids at the sn-1 position. This is Phospholipase A1-II 6 from Oryza sativa subsp. japonica (Rice).